Here is a 429-residue protein sequence, read N- to C-terminus: D-amino acid dehydrogenase (429 aa).

3–17 is a binding site for FAD; it reads VLILGSGVIGVTSAW.

This sequence belongs to the DadA oxidoreductase family. Requires FAD as cofactor.

It catalyses the reaction a D-alpha-amino acid + A + H2O = a 2-oxocarboxylate + AH2 + NH4(+). It functions in the pathway amino-acid degradation; D-alanine degradation; NH(3) and pyruvate from D-alanine: step 1/1. Oxidative deamination of D-amino acids. The chain is D-amino acid dehydrogenase from Xanthomonas euvesicatoria pv. vesicatoria (strain 85-10) (Xanthomonas campestris pv. vesicatoria).